The primary structure comprises 551 residues: Glucose-6-phosphate isomerase (551 aa).

Glu349 functions as the Proton donor in the catalytic mechanism. Residues His378 and Lys480 contribute to the active site.

The protein belongs to the GPI family.

It is found in the cytoplasm. It carries out the reaction alpha-D-glucose 6-phosphate = beta-D-fructose 6-phosphate. Its pathway is carbohydrate biosynthesis; gluconeogenesis. It functions in the pathway carbohydrate degradation; glycolysis; D-glyceraldehyde 3-phosphate and glycerone phosphate from D-glucose: step 2/4. In terms of biological role, catalyzes the reversible isomerization of glucose-6-phosphate to fructose-6-phosphate. This is Glucose-6-phosphate isomerase from Parasynechococcus marenigrum (strain WH8102).